The chain runs to 84 residues: Perlustrin (84 aa).

Positions 1 to 82 constitute an IGFBP N-terminal domain; the sequence is LSCASCENAA…LDFKGVCARV (82 aa). 6 disulfides stabilise this stretch: Cys-3-Cys-28, Cys-6-Cys-30, Cys-11-Cys-31, Cys-18-Cys-34, Cys-42-Cys-55, and Cys-49-Cys-79.

Shell.

Functionally, binds human IGF1 and IGF2 and bovine insulin. The chain is Perlustrin from Haliotis laevigata (Smooth Australian abalone).